Reading from the N-terminus, the 228-residue chain is L-ribulose-5-phosphate 4-epimerase UlaF (228 aa).

Residues 26-27 (GN), 43-44 (SG), and 72-73 (SS) contribute to the substrate site. 3 residues coordinate Zn(2+): aspartate 74, histidine 93, and histidine 95. Catalysis depends on aspartate 118, which acts as the Proton donor/acceptor. Zn(2+) is bound at residue histidine 167. Tyrosine 225 functions as the Proton donor/acceptor in the catalytic mechanism.

It belongs to the aldolase class II family. AraD/FucA subfamily. Zn(2+) serves as cofactor.

The enzyme catalyses L-ribulose 5-phosphate = D-xylulose 5-phosphate. It participates in cofactor degradation; L-ascorbate degradation; D-xylulose 5-phosphate from L-ascorbate: step 4/4. Its function is as follows. Catalyzes the isomerization of L-ribulose 5-phosphate to D-xylulose 5-phosphate. Is involved in the anaerobic L-ascorbate utilization. This chain is L-ribulose-5-phosphate 4-epimerase UlaF, found in Salmonella choleraesuis (strain SC-B67).